The chain runs to 173 residues: Protein SHI RELATED SEQUENCE 8 (173 aa).

Residues Cys52, Cys63, Cys68, Cys72, and Cys79 each contribute to the Zn(2+) site. A DNA-binding region (zn(2)-C6 fungal-type; degenerate) is located at residues 52–79; sequence CQDFGNQAKKDCSHMRCRTCCKSRGFEC. The span at 100 to 110 shows a compositional bias: low complexity; that stretch reads LATVQPQTQLP. The segment at 100 to 121 is disordered; sequence LATVQPQTQLPRGESVPKRHRE.

This sequence belongs to the SHI protein family.

Its subcellular location is the nucleus. Functionally, transcription activator that binds DNA on 5'-ACTCTAC-3' and promotes auxin homeostasis-regulating gene expression (e.g. YUC genes), as well as genes affecting stamen development, cell expansion and timing of flowering. Synergistically with other SHI-related proteins, regulates gynoecium, stamen and leaf development in a dose-dependent manner, controlling apical-basal patterning. Promotes style and stigma formation, and influence vascular development during gynoecium development. May also have a role in the formation and/or maintenance of the shoot apical meristem (SAM). This chain is Protein SHI RELATED SEQUENCE 8 (SRS8), found in Arabidopsis thaliana (Mouse-ear cress).